Here is a 104-residue protein sequence, read N- to C-terminus: Guanyl-specific ribonuclease Ap1 (104 aa).

Disulfide bonds link cysteine 2–cysteine 10 and cysteine 6–cysteine 103. The active site involves histidine 40. The active-site Proton acceptor is the glutamate 58. Histidine 92 (proton donor) is an active-site residue.

This sequence belongs to the ribonuclease N1/T1 family.

It localises to the secreted. It catalyses the reaction [RNA] containing guanosine + H2O = an [RNA fragment]-3'-guanosine-3'-phosphate + a 5'-hydroxy-ribonucleotide-3'-[RNA fragment].. The protein is Guanyl-specific ribonuclease Ap1 of Aspergillus pallidus.